Reading from the N-terminus, the 91-residue chain is Small ribosomal subunit protein bS18 (91 aa).

This sequence belongs to the bacterial ribosomal protein bS18 family. Part of the 30S ribosomal subunit. Forms a tight heterodimer with protein bS6.

In terms of biological role, binds as a heterodimer with protein bS6 to the central domain of the 16S rRNA, where it helps stabilize the platform of the 30S subunit. In Gluconacetobacter diazotrophicus (strain ATCC 49037 / DSM 5601 / CCUG 37298 / CIP 103539 / LMG 7603 / PAl5), this protein is Small ribosomal subunit protein bS18.